Here is a 63-residue protein sequence, read N- to C-terminus: Sperm protamine P1 (63 aa).

Positions 1–63 (MARYRRHSRS…RYSRRGRRRY (63 aa)) are disordered.

The protein belongs to the protamine P1 family. Testis.

Its subcellular location is the nucleus. It localises to the chromosome. Its function is as follows. Protamines substitute for histones in the chromatin of sperm during the haploid phase of spermatogenesis. They compact sperm DNA into a highly condensed, stable and inactive complex. The protein is Sperm protamine P1 (PRM1) of Sminthopsis griseoventer (Gray-bellied dunnart).